A 126-amino-acid chain; its full sequence is Large ribosomal subunit protein bL12 (126 aa).

This sequence belongs to the bacterial ribosomal protein bL12 family. As to quaternary structure, homodimer. Part of the ribosomal stalk of the 50S ribosomal subunit. Forms a multimeric L10(L12)X complex, where L10 forms an elongated spine to which 2 to 4 L12 dimers bind in a sequential fashion. Binds GTP-bound translation factors.

Its function is as follows. Forms part of the ribosomal stalk which helps the ribosome interact with GTP-bound translation factors. Is thus essential for accurate translation. The sequence is that of Large ribosomal subunit protein bL12 from Methylobacterium nodulans (strain LMG 21967 / CNCM I-2342 / ORS 2060).